The chain runs to 383 residues: Protein FAM217B (383 aa).

Disordered stretches follow at residues 1–70 (MNAG…CQGA), 89–115 (ADEDSASDLSDSERIPIPPSPLTPPDL), 200–222 (KAKGGKARPPTAPGTSGALKSPG), 232–251 (SKPLPHQEGASKSGPSRKKA), 284–325 (QTLE…HIRV), and 338–383 (SCKA…YKLK). Residues 8–43 (NKVQHSKNSSGKRQSKSQVPHASSQPRSSLTAVTQP) are compositionally biased toward polar residues. Residues 44 to 56 (TEEKLKESISPEA) show a composition bias toward basic and acidic residues. Over residues 374–383 (GVKQNTYKLK) the composition is skewed to polar residues.

It belongs to the FAM217 family.

The polypeptide is Protein FAM217B (FAM217B) (Homo sapiens (Human)).